Here is a 236-residue protein sequence, read N- to C-terminus: MSSNDRDHRRFNSDHHSFWPNPSTYDLNSKIMLAAVASLSGVILIVFALHLYARFVLRRRREAFRGLPVIFRHPFEMPKRGLNPTVIASLPTFTVGATDGVAASATECAVCLSVLKEQDKARELPNCKHIFHVDCVDTWLTTCSTCPVCRTEVEPRPRLEPEPREGPVGTAPQLLVETRLNLTVEAASSSSSDNKTVVSPASRLNSFRKILTRERSSNRINHSCPDQDRVADLERH.

Residues 31-51 form a helical membrane-spanning segment; it reads IMLAAVASLSGVILIVFALHL. The RING-type; atypical zinc-finger motif lies at 108–150; sequence CAVCLSVLKEQDKARELPNCKHIFHVDCVDTWLTTCSTCPVCR.

This sequence belongs to the RING-type zinc finger family. ATL subfamily.

It localises to the membrane. The enzyme catalyses S-ubiquitinyl-[E2 ubiquitin-conjugating enzyme]-L-cysteine + [acceptor protein]-L-lysine = [E2 ubiquitin-conjugating enzyme]-L-cysteine + N(6)-ubiquitinyl-[acceptor protein]-L-lysine.. It functions in the pathway protein modification; protein ubiquitination. Functionally, E3 ubiquitin-protein ligase able to catalyze polyubiquitination with ubiquitin-conjugating enzyme E2 UBC8, UBC10, UBC11, UBC28, UBC29, UBC30, UBC35 and UBC36 in vitro. The sequence is that of E3 ubiquitin-protein ligase ATL41 (ATL41) from Arabidopsis thaliana (Mouse-ear cress).